The primary structure comprises 602 residues: UvrABC system protein C (602 aa).

Residues 17-94 enclose the GIY-YIG domain; sequence TTSGCYKMYS…IKEYKPDYNI (78 aa). Residues 199–234 enclose the UVR domain; it reads SKLLDETEIKMKEAIKKEDFEAAIKLKETKRSLIEI.

This sequence belongs to the UvrC family. Interacts with UvrB in an incision complex.

Its subcellular location is the cytoplasm. Its function is as follows. The UvrABC repair system catalyzes the recognition and processing of DNA lesions. UvrC both incises the 5' and 3' sides of the lesion. The N-terminal half is responsible for the 3' incision and the C-terminal half is responsible for the 5' incision. In Borrelia hermsii (strain HS1 / DAH), this protein is UvrABC system protein C.